Here is a 347-residue protein sequence, read N- to C-terminus: Selenide, water dikinase (347 aa).

Cysteine 17 is an active-site residue. ATP contacts are provided by residues lysine 20 and 48–50; that span reads TRD. Aspartate 51 contributes to the Mg(2+) binding site. Residues aspartate 68, aspartate 91, and 139 to 141 each bind ATP; that span reads GHS. Aspartate 91 is a Mg(2+) binding site. Aspartate 227 is a binding site for Mg(2+).

This sequence belongs to the selenophosphate synthase 1 family. Class I subfamily. As to quaternary structure, homodimer. Mg(2+) serves as cofactor.

The catalysed reaction is hydrogenselenide + ATP + H2O = selenophosphate + AMP + phosphate + 2 H(+). Its function is as follows. Synthesizes selenophosphate from selenide and ATP. The chain is Selenide, water dikinase from Escherichia coli O9:H4 (strain HS).